The chain runs to 460 residues: Trigger factor (460 aa).

A PPIase FKBP-type domain is found at 166 to 245 (DDFLTIDITA…VKAVKERELP (80 aa)). The disordered stretch occupies residues 434–460 (AAEEAAAGEANEEADVVASDDPAAVKF). A compositionally biased stretch (low complexity) spans 449 to 460 (VVASDDPAAVKF).

The protein belongs to the FKBP-type PPIase family. Tig subfamily.

It localises to the cytoplasm. The enzyme catalyses [protein]-peptidylproline (omega=180) = [protein]-peptidylproline (omega=0). Involved in protein export. Acts as a chaperone by maintaining the newly synthesized protein in an open conformation. Functions as a peptidyl-prolyl cis-trans isomerase. This chain is Trigger factor, found in Paenarthrobacter aurescens (strain TC1).